Here is a 387-residue protein sequence, read N- to C-terminus: Patatin-01 (387 aa).

The signal sequence occupies residues 1-23 (MATTKSFLILSVMILATTSSTFA). Residues 32-230 (LSIDGGGIKG…TVADPALLSV (199 aa)) enclose the PNPLA domain. The GXGXXG signature appears at 36–41 (GGGIKG). The GXSXG signature appears at 75–79 (GTSTG). The active-site Nucleophile is the S77. Residue N115 is glycosylated (N-linked (GlcNAc...) asparagine). The active-site Proton acceptor is D216. The short motif at 216 to 218 (DGA) is the DGA/G element. Positions 361–385 (ETYEEALKRFAKLLSDRKKLRANKA) form a coiled coil.

It belongs to the patatin family. As to expression, tuber.

It is found in the vacuole. Its function is as follows. Probable lipolytic acyl hydrolase (LAH), an activity which is thought to be involved in the response of tubers to pathogens. The protein is Patatin-01 of Solanum tuberosum (Potato).